The following is a 184-amino-acid chain: Large ribosomal subunit protein uL6 (184 aa).

The protein belongs to the universal ribosomal protein uL6 family. Part of the 50S ribosomal subunit.

Functionally, this protein binds to the 23S rRNA, and is important in its secondary structure. It is located near the subunit interface in the base of the L7/L12 stalk, and near the tRNA binding site of the peptidyltransferase center. The sequence is that of Large ribosomal subunit protein uL6 from Thermosipho melanesiensis (strain DSM 12029 / CIP 104789 / BI429).